A 408-amino-acid polypeptide reads, in one-letter code: BRCA1-A complex subunit Abraxas 1 (408 aa).

Residues 7 to 155 form the MPN domain; that stretch reads TAVISGFVFG…KSTHRLEYAL (149 aa). The stretch at 210–272 forms a coiled coil; that stretch reads ALAEVNRISD…MEEKGNKVSE (63 aa). Residues 335 to 408 form a disordered region; it reads HRRQAGKRKA…EVSRSKSPTF (74 aa). Basic residues predominate over residues 337–358; the sequence is RQAGKRKAHSKQLGKTSTKKSR. Over residues 394–408 the composition is skewed to polar residues; it reads QSLNVEVSRSKSPTF. Ser405 bears the Phosphoserine mark. The pSXXF motif motif lies at 405–408; sequence SPTF.

Belongs to the FAM175 family. Abraxas subfamily. As to quaternary structure, component of the BRCA1-A complex. Component of the BRISC complex. Homodimer. Interacts directly (when phosphorylated at Ser-405) with brca1. The phosphorylated homodimer can interact directly with two brca1 chains, giving rise to a heterotetramer. Post-translationally, phosphorylation of Ser-405 of the pSXXF motif by ATM or ATR constitutes a specific recognition motif for the BRCT domain of BRCA1.

The protein localises to the nucleus. Its function is as follows. Involved in DNA damage response and double-strand break (DSB) repair. Component of the BRCA1-A complex, acting as a central scaffold protein that assembles the various components of the complex and mediates the recruitment of brca1. The BRCA1-A complex specifically recognizes 'Lys-63'-linked ubiquitinated histones H2A and H2AX at DNA lesion sites, leading to target the brca1-bard1 heterodimer to sites of DNA damage at DSBs. This complex also possesses deubiquitinase activity that specifically removes 'Lys-63'-linked ubiquitin on histones H2A and H2AX. This Xenopus laevis (African clawed frog) protein is BRCA1-A complex subunit Abraxas 1.